The chain runs to 304 residues: Acetyl-coenzyme A carboxylase carboxyl transferase subunit beta (304 aa).

One can recognise a CoA carboxyltransferase N-terminal domain in the interval 25–294 (VWTKCDSCGQ…PSVVESKADT (270 aa)). The Zn(2+) site is built by cysteine 29, cysteine 32, cysteine 48, and cysteine 51. The segment at 29–51 (CDSCGQVLYRAELERNLEVCPKC) adopts a C4-type zinc-finger fold.

It belongs to the AccD/PCCB family. As to quaternary structure, acetyl-CoA carboxylase is a heterohexamer composed of biotin carboxyl carrier protein (AccB), biotin carboxylase (AccC) and two subunits each of ACCase subunit alpha (AccA) and ACCase subunit beta (AccD). It depends on Zn(2+) as a cofactor.

Its subcellular location is the cytoplasm. The enzyme catalyses N(6)-carboxybiotinyl-L-lysyl-[protein] + acetyl-CoA = N(6)-biotinyl-L-lysyl-[protein] + malonyl-CoA. It participates in lipid metabolism; malonyl-CoA biosynthesis; malonyl-CoA from acetyl-CoA: step 1/1. In terms of biological role, component of the acetyl coenzyme A carboxylase (ACC) complex. Biotin carboxylase (BC) catalyzes the carboxylation of biotin on its carrier protein (BCCP) and then the CO(2) group is transferred by the transcarboxylase to acetyl-CoA to form malonyl-CoA. The polypeptide is Acetyl-coenzyme A carboxylase carboxyl transferase subunit beta (Yersinia pseudotuberculosis serotype O:1b (strain IP 31758)).